The following is a 78-amino-acid chain: Large ribosomal subunit protein bL28 (78 aa).

Residues 1–25 (MSRVCQVTGKRPTVGNNRSHARNAT) form a disordered region.

It belongs to the bacterial ribosomal protein bL28 family.

The sequence is that of Large ribosomal subunit protein bL28 from Alteromonas mediterranea (strain DSM 17117 / CIP 110805 / LMG 28347 / Deep ecotype).